Consider the following 315-residue polypeptide: Outer membrane protease OmpP (315 aa).

An N-terminal signal peptide occupies residues 1 to 23 (MQTKLLAIMLAAPVVFSSQEASA). Active-site residues include Asp-103, Asp-105, Asp-230, and His-232.

It belongs to the peptidase A26 family.

The protein localises to the cell outer membrane. Functionally, protease; also acts as a receptor for bacteriophage Ox2. The chain is Outer membrane protease OmpP (ompP) from Escherichia coli (strain K12).